Consider the following 561-residue polypeptide: Putative transport protein YbjL (561 aa).

A run of 5 helical transmembrane segments spans residues 8 to 28 (LLNGNYILLLFVVLALGLCLG), 32 to 52 (LGSIQLGNSIGVLVVSLLLGQ), 66 to 86 (FMLFIFCVGVEAGPNFFSIFF), 94 to 114 (MLALVMVGSALVIALGLGKLF), and 158 to 178 (NLSLGYALTYLIGLVSLIVGA). RCK C-terminal domains follow at residues 200–288 (RGLD…SFRN) and 292–373 (VFDR…RIGF). The next 6 helical transmembrane spans lie at 383–403 (LLAFCAFFVIGLMIGMITFQF), 406–426 (FSFGMGNAAGLLFAGIMLGFM), 451–471 (VFMAGVGLSAGSGINNGLGAI), 475–495 (MLIAGLIVSLVPVVICFLFGA), 503–523 (ALLFGAMMGARTCAPAMEIIS), and 540–560 (AIANVLLTLAGTIIVMVCPGL).

The protein belongs to the AAE transporter (TC 2.A.81) family. YbjL subfamily.

It localises to the cell membrane. This Shigella dysenteriae serotype 1 (strain Sd197) protein is Putative transport protein YbjL.